Reading from the N-terminus, the 243-residue chain is MFAVSAMRRRRRRILAECRTREAVYKERTLELLSQGVETDDPEFIEVFTSARNAHSDYKAQLRSNMRLEATDRKTKIIQRHIDEQLDRRLILDINRKLLNPKLQLQLDQTEEAILEKEDILAQTIDDITLNDSITNTDELDEESEALLTKWILNQKTKKRPTVAKTAIAPTAHGLQTKVSRNVFITGKDDLVQPTDLGQPSTHEVITCTSRERIIHPDGIHTEIYTTEDVSPTILDDVSDSCV.

The protein belongs to the alphaherpesvirinae HHV-1 UL14 protein family. In terms of processing, phosphorylated.

It localises to the virion tegument. The protein localises to the host cytoplasm. It is found in the host nucleus. In terms of biological role, contributes to the nuclear transport of the viral transcriptional activator VP16 homolog during the early phase of infection. Therefore, participates indirectly in the regulation of the immediate-early gene expression. Additionally, seems to be important for efficient nuclear targeting of capsids. In Gallid herpesvirus 2 (strain Chicken/Md5/ATCC VR-987) (GaHV-2), this protein is Tegument protein UL14 homolog (MDV026).